Reading from the N-terminus, the 168-residue chain is Mediator of RNA polymerase II transcription subunit 7b (168 aa).

Residues Met1 to Tyr12 show a composition bias toward pro residues. Residues Met1–Ile33 are disordered. 2 coiled-coil regions span residues Lys64–Leu92 and Ile132–Phe162.

The protein belongs to the Mediator complex subunit 7 family. In terms of assembly, component of the Mediator complex. Interacts with MEE14/CBP1.

The protein resides in the nucleus. Its function is as follows. Component of the Mediator complex, a coactivator involved in the regulated transcription of nearly all RNA polymerase II-dependent genes. Mediator functions as a bridge to convey information from gene-specific regulatory proteins to the basal RNA polymerase II transcription machinery. The Mediator complex, having a compact conformation in its free form, is recruited to promoters by direct interactions with regulatory proteins and serves for the assembly of a functional pre-initiation complex with RNA polymerase II and the general transcription factors. The polypeptide is Mediator of RNA polymerase II transcription subunit 7b (MED7B) (Arabidopsis thaliana (Mouse-ear cress)).